A 158-amino-acid chain; its full sequence is 14-3-3 protein gamma (158 aa).

The interaction with SPATA18/MIEAP stretch occupies residues 1-158; that stretch reads AAAMKNVTEL…TSDQQDDDGG (158 aa). Ser48 is modified (phosphoserine). Residue Tyr60 is modified to Phosphotyrosine. Residue Thr72 is modified to Phosphothreonine. Position 130 is a phosphoserine (Ser130). Thr149 is subject to Phosphothreonine. Position 150 is a phosphoserine (Ser150).

Belongs to the 14-3-3 family. As to quaternary structure, homodimer. Part of a complex that contains DSG3, PKP1, YAP1 and YWHAG; the complex is required for localization of DSG3 and YAP1 to the cell membrane in keratinocytes. Interacts with SAMSN1. Interacts with RAF1, SSH1 and CRTC2/TORC2. Interacts with ABL1 (phosphorylated form); the interaction retains it in the cytoplasm. Interacts with GAB2. Interacts with MDM4 (phosphorylated); negatively regulates MDM4 activity toward TP53. Interacts with PKA-phosphorylated AANAT and SIRT2. Interacts with the 'Thr-369' phosphorylated form of DAPK2. Interacts with PI4KB, TBC1D22A and TBC1D22B. Interacts with SLITRK1. Interacts with LRRK2; this interaction is dependent on LRRK2 phosphorylation. Interacts with MARK2 and MARK3. Interacts with MEFV. Interacts with ENDOG, TSC2 and PIK3C3; interaction with ENDOG weakens its interaction with TSC2 and PIK3C3. Interacts with (phosphorylated) WDR24. Interacts with BEST1; this interaction promotes L-glutamate channel activity leading to the positive regulation of NMDA glutamate receptor activity through the L-glutamate secretion. Interacts with PKP1 (when phosphorylated); the interaction results in translocation of PKP1 to the cytoplasm and loss of intercellular adhesion in keratinocytes. Interacts with SPATA18/MIEAP; a protein that also plays a role in MALM. In terms of processing, phosphorylated by various PKC isozymes.

The protein localises to the cytoplasm. Its subcellular location is the cytosol. It is found in the mitochondrion matrix. In terms of biological role, adapter protein implicated in the regulation of a large spectrum of both general and specialized signaling pathways. Binds to a large number of partners, usually by recognition of a phosphoserine or phosphothreonine motif. Binding generally results in the modulation of the activity of the binding partner. Promotes inactivation of WDR24 component of the GATOR2 complex by binding to phosphorylated WDR24. Participates in the positive regulation of NMDA glutamate receptor activity by promoting the L-glutamate secretion through interaction with BEST1. Reduces keratinocyte intercellular adhesion, via interacting with PKP1 and sequestering it in the cytoplasm, thereby reducing its incorporation into desmosomes. Plays a role in mitochondrial protein catabolic process (also named MALM) that promotes the degradation of damaged proteins inside mitochondria. In Ovis aries (Sheep), this protein is 14-3-3 protein gamma.